We begin with the raw amino-acid sequence, 483 residues long: Uroporphyrinogen-III C-methyltransferase (483 aa).

It belongs to the precorrin methyltransferase family.

The enzyme catalyses uroporphyrinogen III + 2 S-adenosyl-L-methionine = precorrin-2 + 2 S-adenosyl-L-homocysteine + H(+). The chain is Uroporphyrinogen-III C-methyltransferase (nasF) from Bacillus subtilis (strain 168).